Here is a 393-residue protein sequence, read N- to C-terminus: Methylthioribose kinase (393 aa).

ATP is bound by residues asparagine 38, lysine 53, and 107–109 (EDL). Substrate is bound at residue aspartate 225. 242–244 (DPE) lines the ATP pocket. Substrate is bound at residue arginine 332.

The protein belongs to the methylthioribose kinase family. In terms of assembly, homodimer.

The enzyme catalyses 5-(methylsulfanyl)-D-ribose + ATP = 5-(methylsulfanyl)-alpha-D-ribose 1-phosphate + ADP + H(+). The protein operates within amino-acid biosynthesis; L-methionine biosynthesis via salvage pathway; S-methyl-5-thio-alpha-D-ribose 1-phosphate from S-methyl-5'-thioadenosine (hydrolase route): step 2/2. Functionally, catalyzes the phosphorylation of methylthioribose into methylthioribose-1-phosphate. The chain is Methylthioribose kinase from Bacillus cereus (strain ATCC 10987 / NRS 248).